Reading from the N-terminus, the 489-residue chain is MKFDDLRDFIGQLEERGLLKRIKQEIDPHLEMTEISDRTLRAGGPALLFENPKGFDTPVLTNLFGTTQRVALAMGQDDVAALKEVGKWLAYLKEPEPPKGIKSLWEKLPIFKQVLNMPTKKVRSPACQQVIMEGDDVDLTKLPIMTCWPGDVAPLITWGLTITKGPYKKRQNLGIYRQQLLGKNKIIMRWLSHRGGALDFREWQEVNPGKPFPVSVALGADPATILGAVTPIPDTLSEYAFAGLLRGSRTKVAKSISNDLDIPATAEIILEGYLQPGEEAPEGPYGDHTGYYNEVDDFQVMTVTHVTHRENPIYLSTYTGRPPDEPSILGVALNEIFVPILQKQFPEIVDFYLPPEGCSYRMAVVSIKKSYPGHAKRVMFGIWSFLRQFMYTKFIIVCDDDVNVRDWNDVIWAITTRMDPSRDTTLVDNTPIDYLDFASPVSGLGSKMGMDATNKWAGESDREWGTPILMDKKVKEKIDDLWQDLDILS.

Asn172 lines the Mn(2+) pocket. Residues 175–177 (IYR), 189–191 (RWL), and 194–195 (RG) contribute to the prenylated FMN site. Glu238 is a binding site for Mn(2+). Catalysis depends on Asp287, which acts as the Proton donor.

The protein belongs to the UbiD family. In terms of assembly, homohexamer. Prenylated FMN is required as a cofactor. It depends on Mn(2+) as a cofactor.

The protein resides in the cell membrane. The enzyme catalyses a 4-hydroxy-3-(all-trans-polyprenyl)benzoate + H(+) = a 2-(all-trans-polyprenyl)phenol + CO2. It functions in the pathway cofactor biosynthesis; ubiquinone biosynthesis. Catalyzes the decarboxylation of 3-octaprenyl-4-hydroxy benzoate to 2-octaprenylphenol, an intermediate step in ubiquinone biosynthesis. The protein is 3-octaprenyl-4-hydroxybenzoate carboxy-lyase of Psychromonas ingrahamii (strain DSM 17664 / CCUG 51855 / 37).